The sequence spans 199 residues: Putative AgrB-like protein (199 aa).

5 helical membrane passes run 43-63, 81-101, 108-128, 139-159, and 165-185; these read IIIF…FSFI, YGCL…TRLF, FYIV…PCPN, LKIL…LSPL, and ILIS…KGVI.

This sequence belongs to the AgrB family.

The protein resides in the cell membrane. Functionally, may be involved in the proteolytic processing of a quorum sensing system signal molecule precursor. The chain is Putative AgrB-like protein (cfg02) from Clostridium beijerinckii (Clostridium MP).